Here is a 57-residue protein sequence, read N- to C-terminus: MLTWALTFFVLGVIAAVFGFGGVIGVAASIAKVIFLLCVAFVVLFSVLAFKQHKRHK.

2 consecutive transmembrane segments (helical) span residues 8–28 (FFVLGVIAAVFGFGGVIGVAA) and 30–50 (IAKVIFLLCVAFVVLFSVLAF).

This sequence belongs to the UPF0391 family.

The protein resides in the cell membrane. In Pseudoalteromonas atlantica (strain T6c / ATCC BAA-1087), this protein is UPF0391 membrane protein Patl_0263.